The chain runs to 59 residues: UPF0434 protein SO_2800 (59 aa).

The protein belongs to the UPF0434 family.

The sequence is that of UPF0434 protein SO_2800 from Shewanella oneidensis (strain ATCC 700550 / JCM 31522 / CIP 106686 / LMG 19005 / NCIMB 14063 / MR-1).